The primary structure comprises 311 residues: JNK1/MAPK8-associated membrane protein (311 aa).

Topologically, residues 1–57 are lumenal; that stretch reads MAVDIQPACLGLYCGKTLLFKNGSTEIYGECGVCPRGQRTNAQKYCQPCTESPELYD. Asparagine 22 is a glycosylation site (N-linked (GlcNAc...) asparagine). The helical transmembrane segment at 58 to 78 threads the bilayer; it reads WLYLGFMAMLPLVLHWFFIEW. Over 79-87 the chain is Cytoplasmic; it reads YSGKKSSSA. Residues 88–108 form a helical membrane-spanning segment; the sequence is LFQHITALFECSMAAIITLLV. Residues 109-149 lie on the Lumenal side of the membrane; sequence SDPVGVLYIRSCRVLMLSDWYTMLYNPSPDYVTTVHCTHEA. Residues 150–170 traverse the membrane as a helical segment; it reads VYPLYTIVFIYYAFCLVLMML. Residues 171–188 are Cytoplasmic-facing; that stretch reads LRPLLVKKIACGLGKSDR. Residues 189-209 form a helical membrane-spanning segment; that stretch reads FKSIYAALYFFPILTVLQAVG. Residue glycine 210 is a topological domain, lumenal. The helical transmembrane segment at 211–231 threads the bilayer; that stretch reads GLLYYAFPYIILVLSLVTLAV. Residues 232-250 lie on the Cytoplasmic side of the membrane; sequence YMSASEIENCYDLLVRKKR. The helical transmembrane segment at 251–271 threads the bilayer; the sequence is LIVLFSHWLLHAYGIISISRV. The Lumenal segment spans residues 272–277; sequence DKLEQD. Residues 278–298 traverse the membrane as a helical segment; the sequence is LPLLALVPTPALFYLFTAKFT. Residues 299-311 are Cytoplasmic-facing; the sequence is EPSRILSEGANGH.

In terms of assembly, interacts with RNF5 and MAPK8, but not with MAPK9. Binding to MAPK8 occurs before and after exposure to stress, such as UV irradiation. After exposure to stress, interacts with phosphorylated MAPK8. Competes with DUSP10 for MAPK8 binding. Associates with multiple components of the proteasome and with ERAD regulatory proteins including AMFR/GP78, CANX, PSMC1, PSMC2, PSMC3/TBP1, PSMC5, PSMC6, PSMD8, SEC61-ALPHA and UFD1. Interacts with DERL1 (in the presence of misfolded protein CFTR(F508del)). Ubiquitinated by RNF5 via 'Lys-63'-linked ubiquitin linkage in a UBE2N-dependent manner. Ubiquitination decreases association with components of the proteasome and ERAD.

It localises to the endoplasmic reticulum membrane. Regulates the duration of MAPK8 activity in response to various stress stimuli. Facilitates degradation of misfolded endoplasmic reticulum (ER) proteins through the recruitment of components of the proteasome and endoplasmic reticulum-associated degradation (ERAD) system. This chain is JNK1/MAPK8-associated membrane protein (JKAMP), found in Homo sapiens (Human).